We begin with the raw amino-acid sequence, 437 residues long: Glutamate-1-semialdehyde 2,1-aminomutase (437 aa).

K279 is subject to N6-(pyridoxal phosphate)lysine.

This sequence belongs to the class-III pyridoxal-phosphate-dependent aminotransferase family. HemL subfamily. In terms of assembly, homodimer. Pyridoxal 5'-phosphate serves as cofactor.

It localises to the cytoplasm. The catalysed reaction is (S)-4-amino-5-oxopentanoate = 5-aminolevulinate. Its pathway is porphyrin-containing compound metabolism; protoporphyrin-IX biosynthesis; 5-aminolevulinate from L-glutamyl-tRNA(Glu): step 2/2. This is Glutamate-1-semialdehyde 2,1-aminomutase from Sorangium cellulosum (strain So ce56) (Polyangium cellulosum (strain So ce56)).